We begin with the raw amino-acid sequence, 225 residues long: Ribonuclease 3 (225 aa).

The RNase III domain maps to 5–127 (MNKLTSKLGY…IIGAIYLDSD (123 aa)). Glu-40 provides a ligand contact to Mg(2+). The active site involves Asp-44. Mg(2+)-binding residues include Asp-113 and Glu-116. Residue Glu-116 is part of the active site. One can recognise a DRBM domain in the interval 154-224 (DPKTRLQEFL…AETALEQLTN (71 aa)).

It belongs to the ribonuclease III family. As to quaternary structure, homodimer. It depends on Mg(2+) as a cofactor.

It is found in the cytoplasm. The catalysed reaction is Endonucleolytic cleavage to 5'-phosphomonoester.. In terms of biological role, digests double-stranded RNA. Involved in the processing of primary rRNA transcript to yield the immediate precursors to the large and small rRNAs (23S and 16S). Processes some mRNAs, and tRNAs when they are encoded in the rRNA operon. Processes pre-crRNA and tracrRNA of type II CRISPR loci if present in the organism. The chain is Ribonuclease 3 from Vibrio cholerae serotype O1 (strain ATCC 39315 / El Tor Inaba N16961).